Reading from the N-terminus, the 246-residue chain is Osmotin-like protein TPM-1 (246 aa).

Residues 1–21 (MAYLRSSFVFFLLAFVTYTYA) form the signal peptide. 8 disulfide bridges follow: cysteine 30–cysteine 225, cysteine 72–cysteine 82, cysteine 87–cysteine 93, cysteine 141–cysteine 213, cysteine 146–cysteine 196, cysteine 154–cysteine 164, cysteine 168–cysteine 177, and cysteine 178–cysteine 183.

This sequence belongs to the thaumatin family.

The protein resides in the vacuole. It carries out the reaction Endohydrolysis of (1-&gt;3)- or (1-&gt;4)-linkages in beta-D-glucans when the glucose residue whose reducing group is involved in the linkage to be hydrolyzed is itself substituted at C-3.. Antifungal protein that inhibits the growth of several phytopathogenic fungi (e.g. Trichothecium roseum, Fusarium oxysporum, Phytophthora citrophthora and Colletotrichum coccodes). May bind to beta-glucans and have beta-1,3-D-glucanase activity. The protein is Osmotin-like protein TPM-1 of Solanum lycopersicum (Tomato).